A 115-amino-acid chain; its full sequence is NADH-ubiquinone oxidoreductase chain 3 (115 aa).

3 helical membrane-spanning segments follow: residues 3 to 23 (LPLALTTSITLTLLLVTIAFW), 55 to 75 (FFLVAITFLLFDLEIALLLPL), and 86 to 106 (LMLTVALVLITILAAGLAYEW).

Belongs to the complex I subunit 3 family. In terms of assembly, core subunit of respiratory chain NADH dehydrogenase (Complex I) which is composed of 45 different subunits. Interacts with TMEM186. Interacts with TMEM242.

Its subcellular location is the mitochondrion inner membrane. It catalyses the reaction a ubiquinone + NADH + 5 H(+)(in) = a ubiquinol + NAD(+) + 4 H(+)(out). Core subunit of the mitochondrial membrane respiratory chain NADH dehydrogenase (Complex I) which catalyzes electron transfer from NADH through the respiratory chain, using ubiquinone as an electron acceptor. Essential for the catalytic activity of complex I. The polypeptide is NADH-ubiquinone oxidoreductase chain 3 (Lemur catta (Ring-tailed lemur)).